A 233-amino-acid polypeptide reads, in one-letter code: Transcriptional regulatory protein NatR (233 aa).

Residues 3-117 (KVGLVDDYRV…RLAASFDRYL (115 aa)) enclose the Response regulatory domain. Asp54 is modified (4-aspartylphosphate). The HTH LytTR-type domain maps to 129-233 (ILIKQKSEMH…QLDYFQNYYF (105 aa)).

Phosphorylated by NatK.

It localises to the cytoplasm. Its function is as follows. Member of the two-component regulatory system NatK/NatR that positively regulates the expression of the natAB operon. Acts by binding directly to the promoter of natAB. This is Transcriptional regulatory protein NatR from Bacillus subtilis (strain 168).